We begin with the raw amino-acid sequence, 148 residues long: Large ribosomal subunit protein uL15 (148 aa).

Residues 1 to 30 (MPSRLRKTRKLRGHVSHGHGRIGKHRKHPG) are compositionally biased toward basic residues. Residues 1–37 (MPSRLRKTRKLRGHVSHGHGRIGKHRKHPGGRGNAGG) are disordered. Histidine 39 is modified ((3S)-3-hydroxyhistidine). N6-acetyllysine is present on residues lysine 47 and lysine 55. A Phosphoserine modification is found at serine 68. Lysine 110 is modified (N6-acetyllysine).

This sequence belongs to the universal ribosomal protein uL15 family. Component of the large ribosomal subunit. Hydroxylated on His-39 by MINA.

Its subcellular location is the cytoplasm. In terms of biological role, component of the large ribosomal subunit. The ribosome is a large ribonucleoprotein complex responsible for the synthesis of proteins in the cell. The sequence is that of Large ribosomal subunit protein uL15 (Rpl27a) from Mus musculus (Mouse).